The chain runs to 922 residues: Probable dipeptidyl-aminopeptidase B (922 aa).

Over residues 1–16 the composition is skewed to basic and acidic residues; that stretch reads MATEKGHSRDDEERVP. The disordered stretch occupies residues 1 to 21; that stretch reads MATEKGHSRDDEERVPLTRGS. The Cytoplasmic segment spans residues 1-99; sequence MATEKGHSRD…KPMHKSVKIA (99 aa). The helical; Signal-anchor for type II membrane protein transmembrane segment at 100–120 threads the bilayer; sequence LWSLLFLSLGGWSLAFVLFIF. Over 121-922 the chain is Vacuolar; that stretch reads RSHDTYQTPI…AGLYKFKHLC (802 aa). Residues Asn-135, Asn-200, Asn-351, and Asn-574 are each glycosylated (N-linked (GlcNAc...) asparagine). Ser-756 acts as the Charge relay system in catalysis. An N-linked (GlcNAc...) asparagine glycan is attached at Asn-815. Catalysis depends on charge relay system residues Asp-833 and His-866. Asn-902 carries an N-linked (GlcNAc...) asparagine glycan.

Belongs to the peptidase S9B family.

It is found in the vacuole membrane. The catalysed reaction is Release of an N-terminal dipeptide, Xaa-Yaa-|-Zaa-, from a polypeptide, preferentially when Yaa is Pro, provided Zaa is neither Pro nor hydroxyproline.. Type IV dipeptidyl-peptidase which removes N-terminal dipeptides sequentially from polypeptides having unsubstituted N-termini provided that the penultimate residue is proline. This is Probable dipeptidyl-aminopeptidase B (DAPB) from Ajellomyces capsulatus (strain NAm1 / WU24) (Darling's disease fungus).